Consider the following 484-residue polypeptide: tRNA nucleotidyltransferase cca2 (484 aa).

The B/A element signature appears at 122-124; that stretch reads RAE. Residues 125 to 142 form a flexible loop region; the sequence is SYDDKSRIPSVTPGTVET. The short motif at 234 to 244 is the ERhxxExxxhh motif element; sequence ERVGEEIEKML.

The protein belongs to the tRNA nucleotidyltransferase/poly(A) polymerase family.

The protein resides in the cytoplasm. The catalysed reaction is a tRNA with a 3' CC end + ATP = a tRNA with a 3' CCA end + diphosphate. TRNA nucleotidyltransferase involved in the synthesis of the tRNA CCA terminus. In contrast to what is usually observed in eukaryotes for which one enzyme synthesizes the whole tRNA CCA terminus, in S.pombe, cca1 specifically adds two cytidine residues to a tRNA substrate lacking this sequence while cca2 specifically adds the terminal adenosine residue thereby completing the CCA sequence. This chain is tRNA nucleotidyltransferase cca2, found in Schizosaccharomyces pombe (strain 972 / ATCC 24843) (Fission yeast).